A 78-amino-acid chain; its full sequence is Acyl carrier protein (78 aa).

Positions 2-77 (SDTADRVKKI…DAIKYIDENK (76 aa)) constitute a Carrier domain. S37 is modified (O-(pantetheine 4'-phosphoryl)serine).

This sequence belongs to the acyl carrier protein (ACP) family. 4'-phosphopantetheine is transferred from CoA to a specific serine of apo-ACP by AcpS. This modification is essential for activity because fatty acids are bound in thioester linkage to the sulfhydryl of the prosthetic group.

The protein localises to the cytoplasm. It functions in the pathway lipid metabolism; fatty acid biosynthesis. Its function is as follows. Carrier of the growing fatty acid chain in fatty acid biosynthesis. This chain is Acyl carrier protein, found in Novosphingobium aromaticivorans (strain ATCC 700278 / DSM 12444 / CCUG 56034 / CIP 105152 / NBRC 16084 / F199).